The following is a 475-amino-acid chain: UDP-N-acetylmuramate--L-alanine ligase (475 aa).

114-120 provides a ligand contact to ATP; it reads GTHGKTT.

Belongs to the MurCDEF family.

Its subcellular location is the cytoplasm. It catalyses the reaction UDP-N-acetyl-alpha-D-muramate + L-alanine + ATP = UDP-N-acetyl-alpha-D-muramoyl-L-alanine + ADP + phosphate + H(+). The protein operates within cell wall biogenesis; peptidoglycan biosynthesis. Cell wall formation. The polypeptide is UDP-N-acetylmuramate--L-alanine ligase (Bartonella quintana (strain Toulouse) (Rochalimaea quintana)).